We begin with the raw amino-acid sequence, 116 residues long: MNHNKSYRKLGRRADHRKAMLKNMTISLIKAERIETTVTRAKELRKFAERMITFGKKNTLASRRNAFAFLRDEEVVAKIFNEIAPKYAERNGGYTRIIKTSVRKGDSAEMAIIELV.

The protein belongs to the bacterial ribosomal protein bL17 family. Part of the 50S ribosomal subunit. Contacts protein L32.

In Fusobacterium nucleatum subsp. nucleatum (strain ATCC 25586 / DSM 15643 / BCRC 10681 / CIP 101130 / JCM 8532 / KCTC 2640 / LMG 13131 / VPI 4355), this protein is Large ribosomal subunit protein bL17.